Consider the following 303-residue polypeptide: UDP-3-O-acyl-N-acetylglucosamine deacetylase (303 aa).

Residues H78, H237, and D241 each coordinate Zn(2+). The Proton donor role is filled by H264.

The protein belongs to the LpxC family. Requires Zn(2+) as cofactor.

The catalysed reaction is a UDP-3-O-[(3R)-3-hydroxyacyl]-N-acetyl-alpha-D-glucosamine + H2O = a UDP-3-O-[(3R)-3-hydroxyacyl]-alpha-D-glucosamine + acetate. It participates in glycolipid biosynthesis; lipid IV(A) biosynthesis; lipid IV(A) from (3R)-3-hydroxytetradecanoyl-[acyl-carrier-protein] and UDP-N-acetyl-alpha-D-glucosamine: step 2/6. In terms of biological role, catalyzes the hydrolysis of UDP-3-O-myristoyl-N-acetylglucosamine to form UDP-3-O-myristoylglucosamine and acetate, the committed step in lipid A biosynthesis. In Cellvibrio japonicus (strain Ueda107) (Pseudomonas fluorescens subsp. cellulosa), this protein is UDP-3-O-acyl-N-acetylglucosamine deacetylase.